Here is a 243-residue protein sequence, read N- to C-terminus: Alanyl-tRNA editing protein AlaX-M (243 aa).

4 residues coordinate Zn(2+): histidine 105, histidine 109, cysteine 208, and histidine 212.

The protein belongs to the class-II aminoacyl-tRNA synthetase family. Editing domain AlaX-M subfamily. Zn(2+) serves as cofactor.

It localises to the cytoplasm. Functionally, functions in trans to edit the amino acid moiety from incorrectly charged Ser-tRNA(Ala) or Gly-tRNA(Ala). Has no activity on incorrectly charged Ser-tRNA(Thr), nor on correctly charged Ala-tRNA(Ala) or Ser-tRNA(Ser). This is Alanyl-tRNA editing protein AlaX-M (alaXM) from Methanosarcina barkeri (strain Fusaro / DSM 804).